A 484-amino-acid chain; its full sequence is Monocarboxylate transporter 2 (484 aa).

The Cytoplasmic portion of the chain corresponds to 1–16; it reads MPAPTAVPPPHPLPPD. A helical membrane pass occupies residues 17-37; the sequence is GGWGWVVVGASFISIGFSYAF. The Extracellular segment spans residues 38-60; sequence PKSVTVFFKDIQEIFRAGHSKVA. The helical transmembrane segment at 61–81 threads the bilayer; sequence WISSIMLAVMYAGGPISSVLV. The Cytoplasmic segment spans residues 82–87; that stretch reads NKYGSR. A helical transmembrane segment spans residues 88–108; it reads PVVVIGGLLCCTGMILASFST. The Extracellular segment spans residues 109 to 116; it reads SMIQLYLT. The chain crosses the membrane as a helical span at residues 117–137; sequence IGFISGLGLAFNLQPALTILG. Over 138-144 the chain is Cytoplasmic; it reads KYFYRRR. The chain crosses the membrane as a helical span at residues 145–165; that stretch reads PLASGLAMTGSPVFLSSLAPF. Topologically, residues 166–174 are extracellular; sequence NQYLFNSYG. The chain crosses the membrane as a helical span at residues 175-195; it reads LKGSFLILGGIFLHSCVAGSL. Residues 196-245 are Cytoplasmic-facing; that stretch reads MRPVGTSQQSPKSKSKVSSRHDSSTKKAPKLTLAQRINMFLDFSLFKHRG. A disordered region spans residues 198–223; sequence PVGTSQQSPKSKSKVSSRHDSSTKKA. A helical membrane pass occupies residues 246-266; that stretch reads FLIYLSGNVIMFLGFFAPVIF. The Extracellular portion of the chain corresponds to 267–281; the sequence is LSPYAKNRGVDDYKA. A helical transmembrane segment spans residues 282–302; that stretch reads AYLLSVMAFVDMFSRPCGGLI. Over 303 to 311 the chain is Cytoplasmic; it reads ANTRLVRPR. Residues 312–332 form a helical membrane-spanning segment; that stretch reads IQYFFSLAIVFTGVCHLLCPL. Residues 333–337 lie on the Extracellular side of the membrane; the sequence is AESYT. Residues 338–358 form a helical membrane-spanning segment; that stretch reads ALVVYAIFFGYGFGSVSSILF. Over 359 to 372 the chain is Cytoplasmic; it reads ETLMDLVGPARFSS. The chain crosses the membrane as a helical span at residues 373–393; it reads AVGLVTIVECCPVLLGPPLAG. Residues 394–405 lie on the Extracellular side of the membrane; sequence KLVDETGEHKYL. A helical membrane pass occupies residues 406 to 426; sequence FVASGAIVVLAGIWLFIGNAI. The Cytoplasmic segment spans residues 427–484; that stretch reads NYRLLAKERKREKARKKKSPNRHSKELESLSKSNQDDVAVRVPQAHRSPSDKERESNI. A disordered region spans residues 437 to 484; it reads REKARKKKSPNRHSKELESLSKSNQDDVAVRVPQAHRSPSDKERESNI. The span at 438 to 448 shows a compositional bias: basic residues; that stretch reads EKARKKKSPNR. 2 stretches are compositionally biased toward basic and acidic residues: residues 449 to 465 and 474 to 484; these read HSKE…DDVA and SPSDKERESNI.

This sequence belongs to the major facilitator superfamily. Monocarboxylate porter (TC 2.A.1.13) family. In terms of assembly, homodimer. Interacts with GRID2IP. Interacts with EMB; interaction mediates SLC16A7 targeting to the plasma membrane. Interacts with isoform 2 of BSG.

It localises to the cell membrane. The protein resides in the basolateral cell membrane. Its subcellular location is the cytoplasm. It catalyses the reaction 3-methyl-2-oxobutanoate(out) + H(+)(out) = 3-methyl-2-oxobutanoate(in) + H(+)(in). The enzyme catalyses (S)-lactate(in) + H(+)(in) = (S)-lactate(out) + H(+)(out). It carries out the reaction acetoacetate(out) + H(+)(out) = acetoacetate(in) + H(+)(in). The catalysed reaction is (R)-3-hydroxybutanoate(out) + H(+)(out) = (R)-3-hydroxybutanoate(in) + H(+)(in). It catalyses the reaction 4-methyl-2-oxopentanoate(out) + H(+)(out) = 4-methyl-2-oxopentanoate(in) + H(+)(in). The enzyme catalyses pyruvate(out) + H(+)(out) = pyruvate(in) + H(+)(in). It carries out the reaction (S)-3-hydroxybutanoate(out) + H(+)(out) = (S)-3-hydroxybutanoate(in) + H(+)(in). Transport activity exhibits steep dependence on substrate concentration. Substrate concentration sensitivity of SLC16A7 arises from the strong inter-subunit cooperativity of the SLC16A7 dimer during transport. Inhibited by AR-C155858. Its function is as follows. Proton-coupled monocarboxylate symporter. Catalyzes the rapid transport across the plasma membrane of monocarboxylates such as L-lactate, pyruvate and ketone bodies, acetoacetate, beta-hydroxybutyrate and acetate. Dimerization is functionally required and both subunits work cooperatively in transporting substrate. The chain is Monocarboxylate transporter 2 (SLC16A7) from Meriones unguiculatus (Mongolian jird).